We begin with the raw amino-acid sequence, 81 residues long: ATP synthase subunit c (81 aa).

2 helical membrane-spanning segments follow: residues 6 to 26 (AAAS…GPGI) and 57 to 77 (LAFM…LLFA).

It belongs to the ATPase C chain family. As to quaternary structure, F-type ATPases have 2 components, F(1) - the catalytic core - and F(0) - the membrane proton channel. F(1) has five subunits: alpha(3), beta(3), gamma(1), delta(1), epsilon(1). F(0) has four main subunits: a(1), b(1), b'(1) and c(10-14). The alpha and beta chains form an alternating ring which encloses part of the gamma chain. F(1) is attached to F(0) by a central stalk formed by the gamma and epsilon chains, while a peripheral stalk is formed by the delta, b and b' chains.

It is found in the cellular thylakoid membrane. F(1)F(0) ATP synthase produces ATP from ADP in the presence of a proton or sodium gradient. F-type ATPases consist of two structural domains, F(1) containing the extramembraneous catalytic core and F(0) containing the membrane proton channel, linked together by a central stalk and a peripheral stalk. During catalysis, ATP synthesis in the catalytic domain of F(1) is coupled via a rotary mechanism of the central stalk subunits to proton translocation. Its function is as follows. Key component of the F(0) channel; it plays a direct role in translocation across the membrane. A homomeric c-ring of between 10-14 subunits forms the central stalk rotor element with the F(1) delta and epsilon subunits. The chain is ATP synthase subunit c from Picosynechococcus sp. (strain ATCC 27264 / PCC 7002 / PR-6) (Agmenellum quadruplicatum).